The sequence spans 495 residues: Putative aldehyde dehydrogenase AldA (495 aa).

Residue 212–218 coordinates NAD(+); that stretch reads GKGSESG. Catalysis depends on residues Glu-256 and Cys-290.

It belongs to the aldehyde dehydrogenase family.

It catalyses the reaction an aldehyde + NAD(+) + H2O = a carboxylate + NADH + 2 H(+). This is Putative aldehyde dehydrogenase AldA (aldA) from Staphylococcus aureus (strain Mu50 / ATCC 700699).